Consider the following 419-residue polypeptide: Heparan-sulfate 6-O-sulfotransferase 3-B (419 aa).

The Cytoplasmic portion of the chain corresponds to Met1–Lys7. A helical; Signal-anchor for type II membrane protein membrane pass occupies residues Trp8 to Pro28. Over Ala29–Trp419 the chain is Lumenal. Asn77 carries an N-linked (GlcNAc...) asparagine glycan. His101–Thr109 contributes to the 3'-phosphoadenylyl sulfate binding site. Residues Lys131–Lys132, Arg148, Trp153, and His158 each bind substrate. Catalysis depends on His158, which acts as the Proton acceptor. 3'-phosphoadenylyl sulfate-binding residues include Arg191 and Ser199. His203 and Trp210 together coordinate substrate. 2 N-linked (GlcNAc...) asparagine glycosylation sites follow: Asn270 and Asn275. Thr323–Ile325 provides a ligand contact to 3'-phosphoadenylyl sulfate. N-linked (GlcNAc...) asparagine glycosylation occurs at Asn326. Residue Arg329–Ala330 participates in 3'-phosphoadenylyl sulfate binding. 2 N-linked (GlcNAc...) asparagine glycosylation sites follow: Asn393 and Asn402.

It belongs to the sulfotransferase 6 family. In early somitogenesis, expressed in presumptive forebrain and midbrain, tail bud and Kupffer's vesicle. During mid-somitogenesis, ubiquitous expression which is strongest in the somites and eye. During late somitogenesis, predominantly expressed in eye, hindbrain and ventral somites. At 24 hours post-fertilization (hpf), restricted to lens and neural retina, brain, otic vesicle and somites. At 36 hpf, brain expression is restricted to telencephalon. At 48 hpf, restricted to telencephalon and pectoral fin.

The protein localises to the membrane. The catalysed reaction is alpha-D-glucosaminyl-[heparan sulfate](n) + 3'-phosphoadenylyl sulfate = 6-sulfo-alpha-D-glucosaminyl-[heparan sulfate](n) + adenosine 3',5'-bisphosphate + H(+). In terms of biological role, 6-O-sulfation enzyme which catalyzes the transfer of sulfate from 3'-phosphoadenosine 5'-phosphosulfate (PAPS) to position 6 of the N-sulfoglucosamine residue (GlcNS) of heparan sulfate. The polypeptide is Heparan-sulfate 6-O-sulfotransferase 3-B (Danio rerio (Zebrafish)).